Here is a 495-residue protein sequence, read N- to C-terminus: Probable cytosol aminopeptidase (495 aa).

Mn(2+) is bound by residues Lys-267 and Asp-272. Lys-279 is a catalytic residue. Mn(2+)-binding residues include Asp-290, Asp-349, and Glu-351. Arg-353 is a catalytic residue.

This sequence belongs to the peptidase M17 family. The cofactor is Mn(2+).

Its subcellular location is the cytoplasm. It carries out the reaction Release of an N-terminal amino acid, Xaa-|-Yaa-, in which Xaa is preferably Leu, but may be other amino acids including Pro although not Arg or Lys, and Yaa may be Pro. Amino acid amides and methyl esters are also readily hydrolyzed, but rates on arylamides are exceedingly low.. It catalyses the reaction Release of an N-terminal amino acid, preferentially leucine, but not glutamic or aspartic acids.. Its function is as follows. Presumably involved in the processing and regular turnover of intracellular proteins. Catalyzes the removal of unsubstituted N-terminal amino acids from various peptides. This is Probable cytosol aminopeptidase from Histophilus somni (strain 2336) (Haemophilus somnus).